The chain runs to 292 residues: Histamine N-methyltransferase (292 aa).

E28 is a binding site for substrate. The S-adenosyl-L-methionine site is built by G60, E89, Q94, S120, and I142. Residue N283 participates in substrate binding.

Belongs to the class I-like SAM-binding methyltransferase superfamily. HNMT family. In terms of assembly, monomer.

It localises to the cytoplasm. It carries out the reaction histamine + S-adenosyl-L-methionine = N(tau)-methylhistamine + S-adenosyl-L-homocysteine + H(+). In terms of biological role, inactivates histamine by N-methylation. Plays an important role in degrading histamine and in regulating the airway response to histamine. In Pongo abelii (Sumatran orangutan), this protein is Histamine N-methyltransferase (HNMT).